Here is a 209-residue protein sequence, read N- to C-terminus: Thiamine-phosphate synthase (209 aa).

Residues 37–41 (QLREK) and N69 each bind 4-amino-2-methyl-5-(diphosphooxymethyl)pyrimidine. D70 and D89 together coordinate Mg(2+). S108 contributes to the 4-amino-2-methyl-5-(diphosphooxymethyl)pyrimidine binding site. Position 134 to 136 (134 to 136 (TNT)) interacts with 2-[(2R,5Z)-2-carboxy-4-methylthiazol-5(2H)-ylidene]ethyl phosphate. 4-amino-2-methyl-5-(diphosphooxymethyl)pyrimidine is bound at residue K137. 2-[(2R,5Z)-2-carboxy-4-methylthiazol-5(2H)-ylidene]ethyl phosphate contacts are provided by residues G164 and 184-185 (VS).

It belongs to the thiamine-phosphate synthase family. Mg(2+) serves as cofactor.

The catalysed reaction is 2-[(2R,5Z)-2-carboxy-4-methylthiazol-5(2H)-ylidene]ethyl phosphate + 4-amino-2-methyl-5-(diphosphooxymethyl)pyrimidine + 2 H(+) = thiamine phosphate + CO2 + diphosphate. It carries out the reaction 2-(2-carboxy-4-methylthiazol-5-yl)ethyl phosphate + 4-amino-2-methyl-5-(diphosphooxymethyl)pyrimidine + 2 H(+) = thiamine phosphate + CO2 + diphosphate. The enzyme catalyses 4-methyl-5-(2-phosphooxyethyl)-thiazole + 4-amino-2-methyl-5-(diphosphooxymethyl)pyrimidine + H(+) = thiamine phosphate + diphosphate. It functions in the pathway cofactor biosynthesis; thiamine diphosphate biosynthesis; thiamine phosphate from 4-amino-2-methyl-5-diphosphomethylpyrimidine and 4-methyl-5-(2-phosphoethyl)-thiazole: step 1/1. Its function is as follows. Condenses 4-methyl-5-(beta-hydroxyethyl)thiazole monophosphate (THZ-P) and 2-methyl-4-amino-5-hydroxymethyl pyrimidine pyrophosphate (HMP-PP) to form thiamine monophosphate (TMP). The protein is Thiamine-phosphate synthase of Methanobrevibacter smithii (strain ATCC 35061 / DSM 861 / OCM 144 / PS).